The chain runs to 52 residues: Unknown protein from spot 415 of 2D-PAGE of etiolated coleoptile (52 aa).

The protein is Unknown protein from spot 415 of 2D-PAGE of etiolated coleoptile of Zea mays (Maize).